Here is a 195-residue protein sequence, read N- to C-terminus: Guanylate kinase (195 aa).

One can recognise a Guanylate kinase-like domain in the interval 5-183 (GILFVISGPS…ALQKITAIII (179 aa)). 12 to 19 (GPSGVGKG) is a binding site for ATP.

This sequence belongs to the guanylate kinase family.

Its subcellular location is the cytoplasm. It carries out the reaction GMP + ATP = GDP + ADP. Functionally, essential for recycling GMP and indirectly, cGMP. This chain is Guanylate kinase, found in Syntrophomonas wolfei subsp. wolfei (strain DSM 2245B / Goettingen).